The chain runs to 366 residues: tRNA/tmRNA (uracil-C(5))-methyltransferase (366 aa).

Residues glutamine 190, tyrosine 218, asparagine 223, glutamate 239, and aspartate 299 each contribute to the S-adenosyl-L-methionine site. Cysteine 324 (nucleophile) is an active-site residue. Glutamate 358 serves as the catalytic Proton acceptor.

This sequence belongs to the class I-like SAM-binding methyltransferase superfamily. RNA M5U methyltransferase family. TrmA subfamily.

It carries out the reaction uridine(54) in tRNA + S-adenosyl-L-methionine = 5-methyluridine(54) in tRNA + S-adenosyl-L-homocysteine + H(+). The enzyme catalyses uridine(341) in tmRNA + S-adenosyl-L-methionine = 5-methyluridine(341) in tmRNA + S-adenosyl-L-homocysteine + H(+). Functionally, dual-specificity methyltransferase that catalyzes the formation of 5-methyluridine at position 54 (m5U54) in all tRNAs, and that of position 341 (m5U341) in tmRNA (transfer-mRNA). This chain is tRNA/tmRNA (uracil-C(5))-methyltransferase, found in Salmonella newport (strain SL254).